Reading from the N-terminus, the 621-residue chain is Interferon-induced GTP-binding protein Mx1 (621 aa).

The Dynamin-type G domain occupies 31-304; sequence DLALPAIAVI…LVHHIEKSLP (274 aa). The interval 41–48 is G1 motif; sequence GDQSSGKS. 41 to 48 serves as a coordination point for GTP; sequence GDQSSGKS. Positions 66–68 are G2 motif; that stretch reads VTR. Positions 142–145 are G3 motif; sequence DLPG. GTP-binding positions include 142–146 and 211–214; these read DLPGI and TKPD. The G4 motif stretch occupies residues 211–214; sequence TKPD. The tract at residues 243–246 is G5 motif; sequence KCRG. The GED domain occupies 535–621; it reads LQEMMLHLKS…MKARSYLVEF (87 aa).

Belongs to the TRAFAC class dynamin-like GTPase superfamily. Dynamin/Fzo/YdjA family.

Its subcellular location is the cytoplasm. Does not inhibit strain RB-1 of the fish pathogen, infectious hematopoietic necrosis virus (IHNV). The sequence is that of Interferon-induced GTP-binding protein Mx1 (mx1) from Oncorhynchus mykiss (Rainbow trout).